The following is a 164-amino-acid chain: Phosphopantetheine adenylyltransferase (164 aa).

A substrate-binding site is contributed by Ser-10. ATP-binding positions include 10–11 and His-18; that span reads SF. 3 residues coordinate substrate: Lys-42, Met-74, and Arg-88. Residues 89–91, Glu-99, and 124–130 contribute to the ATP site; these read GLR and YFFVSAR.

The protein belongs to the bacterial CoaD family. In terms of assembly, homohexamer. It depends on Mg(2+) as a cofactor.

The protein resides in the cytoplasm. It carries out the reaction (R)-4'-phosphopantetheine + ATP + H(+) = 3'-dephospho-CoA + diphosphate. The protein operates within cofactor biosynthesis; coenzyme A biosynthesis; CoA from (R)-pantothenate: step 4/5. Reversibly transfers an adenylyl group from ATP to 4'-phosphopantetheine, yielding dephospho-CoA (dPCoA) and pyrophosphate. This chain is Phosphopantetheine adenylyltransferase, found in Anaeromyxobacter dehalogenans (strain 2CP-C).